The sequence spans 167 residues: MLKSAKLYIPSIAAIILSSNIAMAXNNYDTGHATPLRQVADLIDNQITNIDNLFKNRLPLYESNSIKSNFITKDKQYIIIMEVPGFDKSQIKIKVNGNKLFITRNIEEKNKADDSDNYMNKNFNYVISLYEDVDQANISSSLKNGILTIILPRIEIKEQDAREITIN.

The sHSP domain occupies 59–167; sequence PLYESNSIKS…EQDAREITIN (109 aa).

This sequence belongs to the small heat shock protein (HSP20) family.

The polypeptide is Small heat shock protein C1 (hspC1) (Rickettsia felis (strain ATCC VR-1525 / URRWXCal2) (Rickettsia azadi)).